The primary structure comprises 228 residues: tRNA (guanine-N(1)-)-methyltransferase (228 aa).

S-adenosyl-L-methionine is bound by residues G108 and 127 to 132; that span reads VGDFIL.

This sequence belongs to the RNA methyltransferase TrmD family. As to quaternary structure, homodimer.

The protein localises to the cytoplasm. The enzyme catalyses guanosine(37) in tRNA + S-adenosyl-L-methionine = N(1)-methylguanosine(37) in tRNA + S-adenosyl-L-homocysteine + H(+). Its function is as follows. Specifically methylates guanosine-37 in various tRNAs. This is tRNA (guanine-N(1)-)-methyltransferase from Metamycoplasma arthritidis (strain 158L3-1) (Mycoplasma arthritidis).